The primary structure comprises 125 residues: UPF0738 protein GTNG_0708 (125 aa).

Belongs to the UPF0738 family.

This Geobacillus thermodenitrificans (strain NG80-2) protein is UPF0738 protein GTNG_0708.